Here is a 187-residue protein sequence, read N- to C-terminus: uncharacterized protein (187 aa).

This is an uncharacterized protein from Acanthamoeba polyphaga mimivirus (APMV).